Here is a 541-residue protein sequence, read N- to C-terminus: Kinesin light chain 1 (541 aa).

Residues 27 to 156 (KTKQVIQGLE…HLEFMNQLKK (130 aa)) adopt a coiled-coil conformation. A compositionally biased stretch (basic and acidic residues) spans 156 to 176 (KYDDDISPSEDKDSDSSKEPL). The tract at residues 156–201 (KYDDDISPSEDKDSDSSKEPLDDLFPNDEDEPGQGIQHSDSSAAAA) is disordered. At S162 the chain carries Phosphoserine. 5 TPR repeats span residues 211-244 (LRTLHNLVIQYASQGRYEVAVPSCKQALEDLEKT), 253-286 (ATMLNILALVYRDQNKYKDAANLLNDALAIREKT), 295-328 (AATLNNLAVLYGKRGKYKEAEPLCKRALEIREKV), 337-370 (AKQLNNLALLCQNQGKYEEVEYYYQRALGIYQTK), and 380-413 (AKTKNNLASCYLKQGKFKQAETLYKEILTRAHEA). Residue Y448 is modified to Phosphotyrosine. S459 bears the Phosphoserine mark. Residues 463-496 (TTTLKNLGALYRRQGKFEAAETLEEAAMRSRKQG) form a TPR 6 repeat. Residues 493 to 541 (RKQGLDNVHKQRVAEVLNDPESMEKRRSRESLNMDVVKYESGPDGGEEA) form a disordered region. 2 stretches are compositionally biased toward basic and acidic residues: residues 495 to 505 (QGLDNVHKQRV) and 514 to 524 (SMEKRRSRESL). A phosphoserine; by AMPK mark is found at S520 and S523.

This sequence belongs to the kinesin light chain family. As to quaternary structure, oligomeric complex composed of two heavy chains and two light chains. Interacts with SPAG9. Interacts with ATCAY; may link mitochondria to KLC1 and regulate mitochondria localization into neuron projections. Interacts (via TPR repeats) with TOR1A; the interaction associates TOR1A with the kinesin oligomeric complex. Interacts with BORCS5. Interacts with MAPK8IP3/JIP3 and NTRK2/TRKB; interaction with NTRK2/TRKB is mediated by MAPK8IP3/JIP3. Interacts with CLSTN1; phosphorylation at Ser-459 inhibits interaction with CLSTN1. In terms of processing, phosphorylation at Ser-459 by ERK inhibits interaction with CLSTN1 and localization to cytoplasmic vesicles.

The protein localises to the cell projection. The protein resides in the growth cone. It localises to the cytoplasmic vesicle. It is found in the cytoplasm. Its subcellular location is the cytoskeleton. Kinesin is a microtubule-associated force-producing protein that may play a role in organelle transport. The light chain may function in coupling of cargo to the heavy chain or in the modulation of its ATPase activity. The protein is Kinesin light chain 1 (Klc1) of Mus musculus (Mouse).